The following is a 202-amino-acid chain: Peptide methionine sulfoxide reductase B2, chloroplastic (202 aa).

The N-terminal 63 residues, 1–63, are a transit peptide targeting the chloroplast; it reads MAFNIITPGR…RRGFHGGRIV (63 aa). Residues 77–198 enclose the MsrB domain; that stretch reads EEEWRAILSP…NSISLKFTPE (122 aa). Zn(2+)-binding residues include cysteine 116, cysteine 119, cysteine 162, and cysteine 165. A disulfide bond links cysteine 134 and cysteine 187. The Nucleophile role is filled by cysteine 187.

Belongs to the MsrB Met sulfoxide reductase family. Requires Zn(2+) as cofactor. In terms of tissue distribution, expressed in stems, young leaves, floral buds and flowers. Expressed at low levels in roots, mature leaves and siliques (at protein level).

It localises to the plastid. Its subcellular location is the chloroplast. The enzyme catalyses L-methionyl-[protein] + [thioredoxin]-disulfide + H2O = L-methionyl-(R)-S-oxide-[protein] + [thioredoxin]-dithiol. Catalyzes the reduction of methionine sulfoxide (MetSO) to methionine in proteins. Specifically reduces the MetSO R-enantiomer. Plays a protective role against oxidative stress by restoring activity to proteins that have been inactivated by methionine oxidation. May play an essential function in association with MSRB1 in maintaining vegetative growth during environmental constraints, through the preservation of photosynthetic antennae. MSRB1 and MSRB2 account for most of the leaf peptide MSR capacity. The polypeptide is Peptide methionine sulfoxide reductase B2, chloroplastic (Arabidopsis thaliana (Mouse-ear cress)).